The sequence spans 329 residues: Acetyl-coenzyme A carboxylase carboxyl transferase subunit alpha (329 aa).

Residues 40–294 (QLETLAARRR…REALERNLSE (255 aa)) enclose the CoA carboxyltransferase C-terminal domain.

Belongs to the AccA family. As to quaternary structure, acetyl-CoA carboxylase is a heterohexamer composed of biotin carboxyl carrier protein (AccB), biotin carboxylase (AccC) and two subunits each of ACCase subunit alpha (AccA) and ACCase subunit beta (AccD).

The protein localises to the cytoplasm. It carries out the reaction N(6)-carboxybiotinyl-L-lysyl-[protein] + acetyl-CoA = N(6)-biotinyl-L-lysyl-[protein] + malonyl-CoA. The protein operates within lipid metabolism; malonyl-CoA biosynthesis; malonyl-CoA from acetyl-CoA: step 1/1. In terms of biological role, component of the acetyl coenzyme A carboxylase (ACC) complex. First, biotin carboxylase catalyzes the carboxylation of biotin on its carrier protein (BCCP) and then the CO(2) group is transferred by the carboxyltransferase to acetyl-CoA to form malonyl-CoA. This chain is Acetyl-coenzyme A carboxylase carboxyl transferase subunit alpha, found in Synechococcus sp. (strain CC9311).